Reading from the N-terminus, the 242-residue chain is Biosynthetic peptidoglycan transglycosylase (242 aa).

Residues 12–31 (LLFWLMLASALLVLALRWLP) form a helical membrane-spanning segment.

This sequence belongs to the glycosyltransferase 51 family.

The protein localises to the cell inner membrane. The catalysed reaction is [GlcNAc-(1-&gt;4)-Mur2Ac(oyl-L-Ala-gamma-D-Glu-L-Lys-D-Ala-D-Ala)](n)-di-trans,octa-cis-undecaprenyl diphosphate + beta-D-GlcNAc-(1-&gt;4)-Mur2Ac(oyl-L-Ala-gamma-D-Glu-L-Lys-D-Ala-D-Ala)-di-trans,octa-cis-undecaprenyl diphosphate = [GlcNAc-(1-&gt;4)-Mur2Ac(oyl-L-Ala-gamma-D-Glu-L-Lys-D-Ala-D-Ala)](n+1)-di-trans,octa-cis-undecaprenyl diphosphate + di-trans,octa-cis-undecaprenyl diphosphate + H(+). The protein operates within cell wall biogenesis; peptidoglycan biosynthesis. Its function is as follows. Peptidoglycan polymerase that catalyzes glycan chain elongation from lipid-linked precursors. The sequence is that of Biosynthetic peptidoglycan transglycosylase from Ectopseudomonas mendocina (strain ymp) (Pseudomonas mendocina).